A 481-amino-acid chain; its full sequence is Phosphoglycerate kinase, chloroplastic (481 aa).

The N-terminal 75 residues, 1 to 75, are a transit peptide targeting the chloroplast; sequence MASATASHTL…SSKPIRGVAS (75 aa). Residues A98, D99, N101, R115, S137, H138, G140, R141, R196, H228, and R229 each contribute to the (2R)-3-phosphoglycerate site. G274 lines the ADP pocket. Residue G274 participates in CDP binding. The AMP site is built by K276 and K280. K280 is a binding site for ATP. G298 serves as a coordination point for ADP. G298 provides a ligand contact to CDP. Positions 299 and 371 each coordinate AMP. Positions 299 and 371 each coordinate ATP. CDP contacts are provided by G396 and F401. F401 contacts ADP. E402 serves as a coordination point for AMP. ATP-binding residues include E402, D433, and S434. Residue D433 participates in Mg(2+) binding.

This sequence belongs to the phosphoglycerate kinase family. In terms of assembly, monomer. The cofactor is Mg(2+).

The protein localises to the plastid. Its subcellular location is the chloroplast. The enzyme catalyses (2R)-3-phosphoglycerate + ATP = (2R)-3-phospho-glyceroyl phosphate + ADP. Its pathway is carbohydrate biosynthesis; Calvin cycle. The chain is Phosphoglycerate kinase, chloroplastic from Nicotiana tabacum (Common tobacco).